The chain runs to 641 residues: Leucine-rich repeat receptor-like serine/threonine/tyrosine-protein kinase SOBIR1 (641 aa).

Residues 1-31 (MAVPTGSANLFLRPLILAVLSFLLLSSFVSS) form the signal peptide. The Extracellular portion of the chain corresponds to 32 to 284 (VEWLDIDSSD…KKKKSKKKKV (253 aa)). 5 LRR repeats span residues 112 to 133 (ELKE…DILS), 136 to 159 (QLEV…SSLS), 160 to 182 (RLRI…KNLR), 183 to 205 (NLEN…IVSF), and 207 to 228 (NLRF…VMSS). An N-linked (GlcNAc...) asparagine glycan is attached at Asn-154. Asn-186 is a glycosylation site (N-linked (GlcNAc...) asparagine). Residues 243–278 (AETPTSSPTNKPNNSTTSKAPKGAPKPGKLKKKKKK) are disordered. Polar residues predominate over residues 245 to 259 (TPTSSPTNKPNNSTT). Residue Asn-256 is glycosylated (N-linked (GlcNAc...) asparagine). The segment covering 260–269 (SKAPKGAPKP) has biased composition (low complexity). A helical membrane pass occupies residues 285 to 305 (AAWILGFVVGAIGGTISGFVF). Topologically, residues 306-641 (SVLFKLIIQA…VRTMLSQIKH (336 aa)) are cytoplasmic. One can recognise a Protein kinase domain in the interval 347–641 (LASLEIIGRG…VRTMLSQIKH (295 aa)). ATP is bound by residues 353–361 (IGRGGCGEV) and Lys-377. The active-site Proton acceptor is Asp-489.

This sequence belongs to the protein kinase superfamily. Ser/Thr protein kinase family. As to quaternary structure, interacts with CST. Interacts with RLP23. Component of a trimeric complex composed of RLP23, SOBIR1 and BAK1. BAK1 is recruited into a pre-formed RLP23-SOBIR1 complex in a ligand-dependent manner. Autophosphorylated on Ser, Thr and Tyr residues. Mostly present in leaves and flowers, with increasing expression in older flowers.

The protein localises to the cell membrane. It carries out the reaction L-seryl-[protein] + ATP = O-phospho-L-seryl-[protein] + ADP + H(+). It catalyses the reaction L-threonyl-[protein] + ATP = O-phospho-L-threonyl-[protein] + ADP + H(+). The enzyme catalyses L-tyrosyl-[protein] + ATP = O-phospho-L-tyrosyl-[protein] + ADP + H(+). In terms of biological role, dual specificity kinase acting on both serine/threonine- and tyrosine-containing substrates. Acting as a counterplayer of BIR1, promotes the activation of plant defense and cell death. Component of the RLP23-SOBIR1-BAK1 complex that mediates NLP-triggered immunity. Functions as an inhibitor/regulator of abscission, probably by regulating membrane trafficking during abscission. This chain is Leucine-rich repeat receptor-like serine/threonine/tyrosine-protein kinase SOBIR1 (SOBIR1), found in Arabidopsis thaliana (Mouse-ear cress).